Here is a 206-residue protein sequence, read N- to C-terminus: Large ribosomal subunit protein uL4 (206 aa).

Residues 48 to 97 (THAVKNRSLVSGGGKKPWKQKHTGRARQGSTRASQWVGGGKAMGPKPRDY) form a disordered region. Basic residues predominate over residues 63–72 (KPWKQKHTGR).

It belongs to the universal ribosomal protein uL4 family. Part of the 50S ribosomal subunit.

In terms of biological role, one of the primary rRNA binding proteins, this protein initially binds near the 5'-end of the 23S rRNA. It is important during the early stages of 50S assembly. It makes multiple contacts with different domains of the 23S rRNA in the assembled 50S subunit and ribosome. Forms part of the polypeptide exit tunnel. The chain is Large ribosomal subunit protein uL4 from Anaeromyxobacter dehalogenans (strain 2CP-C).